We begin with the raw amino-acid sequence, 81 residues long: Protein Vpu (81 aa).

Over 1 to 7 (MQPLQIL) the chain is Extracellular. A helical membrane pass occupies residues 8 to 28 (SIVALVVAAIIAIVVWSIVFI). At 29–81 (LIRKILRQRKIDRLIDRIRERAEDSGNESEGIRKELSALVEMGHDAPGDIDDL) the chain is on the cytoplasmic side. A phosphoserine; by host CK2 mark is found at S53 and S57.

This sequence belongs to the HIV-1 VPU protein family. As to quaternary structure, homopentamer. Interacts with host CD4 and BRTC; these interactions induce proteasomal degradation of CD4. Interacts with host BST2; this interaction leads to the degradation of host BST2. Interacts with host FBXW11. Interacts with host AP1M1; this interaction plays a role in the mistrafficking and subsequent degradation of host BST2. Interacts with host RANBP2; this interaction allows Vpu to down-regulate host BLM sumoylation. In terms of processing, phosphorylated by host CK2. This phosphorylation is necessary for interaction with human BTRC and degradation of CD4.

It localises to the host membrane. With respect to regulation, ion channel activity is inhibited by hexamethylene amiloride in vitro. In terms of biological role, enhances virion budding by targeting host CD4 and Tetherin/BST2 to proteasome degradation. Degradation of CD4 prevents any unwanted premature interactions between viral Env and its host receptor CD4 in the endoplasmic reticulum. Degradation of antiretroviral protein Tetherin/BST2 is important for virion budding, as BST2 tethers new viral particles to the host cell membrane. Mechanistically, Vpu bridges either CD4 or BST2 to BTRC, a substrate recognition subunit of the Skp1/Cullin/F-box protein E3 ubiquitin ligase, induces their ubiquitination and subsequent proteasomal degradation. The alteration of the E3 ligase specificity by Vpu seems to promote the degradation of host IKBKB, leading to NF-kappa-B down-regulation and subsequent apoptosis. Acts as a viroporin that forms an oligomeric ion channel in membranes. Modulates the host DNA repair mechanisms to promote degradation of nuclear viral cDNA in cells that are already productively infected in order to suppress immune sensing and proviral hyper-integration (superinfection). Manipulates PML-NBs and modulates SUMOylation of host BLM protein thereby enhancing its DNA-end processing activity toward viral unintegrated linear DNA. Also inhibits RAD52-mediated homologous repair of viral cDNA, preventing the generation of dead-end circular forms of single copies of the long terminal repeat and permitting sustained nucleolytic attack. The sequence is that of Protein Vpu from Homo sapiens (Human).